Reading from the N-terminus, the 265-residue chain is SPbeta prophage-derived uncharacterized protein YomU (265 aa).

Positions 238 to 265 (KADGTKGVVTSDEGTGSSQSSDLGGTTE) are disordered. Residues 249 to 265 (DEGTGSSQSSDLGGTTE) show a composition bias toward polar residues.

In Bacillus subtilis (strain 168), this protein is SPbeta prophage-derived uncharacterized protein YomU (yomU).